Consider the following 61-residue polypeptide: Conotoxin Cal14.6 (61 aa).

Residues 1-21 (MKFLLFLSVALLLTSFIETEA) form the signal peptide. Residues 22–38 (GPVNEAGVERLFRALVG) constitute a propeptide that is removed on maturation. Proline 57 is subject to 4-hydroxyproline; partial. Proline 60 is subject to Proline amide.

In terms of processing, contains 2 disulfide bonds. In terms of tissue distribution, expressed by the venom duct.

It localises to the secreted. In terms of biological role, probable neurotoxin with unknown target. Possibly targets ion channels. The protein is Conotoxin Cal14.6 of Californiconus californicus (California cone).